The following is a 614-amino-acid chain: Sorting nexin-18 (614 aa).

Residues 1 to 61 (MALRARALYD…PASYVQVIRA (61 aa)) enclose the SH3 domain. The segment at 85 to 218 (GFEPLPAAPP…SQELGHGEPQ (134 aa)) is disordered. A compositionally biased stretch (pro residues) spans 90–101 (PAAPPAAFPPLL). Over residues 141–151 (SDDDWDDEWDD) the composition is skewed to acidic residues. Residues 266–376 (FQCTIDDPTK…HFLTCPSSTD (111 aa)) form the PX domain. Arg302, Lys304, and Arg342 together coordinate a 1,2-diacyl-sn-glycero-3-phospho-(1D-myo-inositol-4,5-bisphosphate). The 204-residue stretch at 411-614 (LQEVESKIDG…EEALHKYDSV (204 aa)) folds into the BAR domain.

This sequence belongs to the sorting nexin family. Heterodimer with SNX9. Interacts with ITCH. Interacts with dynamin-2 (DNM2), SYNJ1 and WASL. Interacts with the AP-1 complex. Interacts with FCHSD1 (via the F-BAR domain).

Its subcellular location is the endomembrane system. The protein resides in the endosome membrane. It is found in the recycling endosome membrane. It localises to the cell membrane. The protein localises to the cytoplasmic vesicle membrane. In terms of biological role, involved in endocytosis and intracellular vesicle trafficking, both during interphase and at the end of mitosis. Required for efficient progress through mitosis and cytokinesis. Required for normal formation of the cleavage furrow at the end of mitosis. Plays a role in endocytosis via clathrin-coated pits, but also clathrin-independent, actin-dependent fluid-phase endocytosis. Plays a role in macropinocytosis. Binds to membranes enriched in phosphatidylinositol 4,5-bisphosphate and promotes membrane tubulation. Stimulates the GTPase activity of DNM2. Promotes DNM2 location at the plasma membrane. Together with DNM2, involved in autophagosome assembly by regulating trafficking from recycling endosomes of phospholipid scramblase ATG9A. This is Sorting nexin-18 from Mus musculus (Mouse).